A 64-amino-acid polypeptide reads, in one-letter code: Sperm protamine P1 (64 aa).

The segment at 1–64 (MARYRHSRSR…SRRRRRRYYY (64 aa)) is disordered.

Belongs to the protamine P1 family. Testis.

It localises to the nucleus. It is found in the chromosome. Functionally, protamines substitute for histones in the chromatin of sperm during the haploid phase of spermatogenesis. They compact sperm DNA into a highly condensed, stable and inactive complex. This chain is Sperm protamine P1 (PRM1), found in Hypsiprymnodon moschatus (Musky rat kangaroo).